The sequence spans 212 residues: Ropporin-1 (212 aa).

Positions 12 to 43 (PELPELLKQFTKAAIRSQPQDLIQWAAEYFGA) constitute an RIIa domain. Phosphoserine is present on S56. The interval 209 to 212 (VRLE) is interaction with RHPN1.

The protein belongs to the ropporin family. Homodimer. Interacts with AKAP3. May interact with SPA17. Interacts with RHPN1. Interacts with FSCB; the interaction increases upon spermatozoa capacitation conditions. Interacts with CFAP61. Post-translationally, sumoylated, sumoylation decreases upon spermatozoa capacitation conditions.

The protein localises to the cell projection. It is found in the cilium. It localises to the flagellum. Its function is as follows. Important for male fertility. With ROPN1L, involved in fibrous sheath integrity and sperm motility, plays a role in PKA-dependent signaling processes required for spermatozoa capacitation. The protein is Ropporin-1 (ROPN1) of Bos taurus (Bovine).